We begin with the raw amino-acid sequence, 592 residues long: Salivary peroxidase/catechol oxidase (592 aa).

The N-terminal stretch at 1–21 is a signal peptide; sequence MWMFLKLLLFVCSSWWSCAQA. A disulfide bridge links cysteine 24 with cysteine 37. N-linked (GlcNAc...) asparagine glycosylation occurs at asparagine 25. Histidine 110 acts as the Proton acceptor in catalysis. Residues aspartate 111, threonine 187, phenylalanine 189, aspartate 191, and serine 193 each coordinate Ca(2+). N-linked (GlcNAc...) asparagine glycosylation is present at asparagine 230. Cysteine 235 and cysteine 244 are disulfide-bonded. A heme b-binding site is contributed by histidine 353. Asparagine 366 carries N-linked (GlcNAc...) asparagine glycosylation. Intrachain disulfides connect cysteine 452-cysteine 509 and cysteine 553-cysteine 580.

This sequence belongs to the peroxidase family. XPO subfamily. In terms of tissue distribution, female salivary gland.

Its subcellular location is the secreted. It carries out the reaction 2 catechol + O2 = 2 1,2-benzoquinone + 2 H2O. Functionally, inhibits noradrenaline-induced smooth muscle contraction in the host, probably due to the oxidation of noradrenaline, resulting in vasodilation. Exhibits peroxidase activity. This chain is Salivary peroxidase/catechol oxidase, found in Anopheles albimanus (New world malaria mosquito).